A 287-amino-acid chain; its full sequence is Spermidine/putrescine transport system permease protein PotB (287 aa).

The Cytoplasmic segment spans residues 1 to 10 (MKNTSKFQNV). Residues 11-31 (VIVTIVGWLVLFVFLPNLMII) traverse the membrane as a helical segment. Residues 32–70 (GTSFLTRDDASFVKMVFTLDNYARLLDPLYFEVLLHSLN) are Periplasmic-facing. The ABC transmembrane type-1 domain maps to 65–271 (LLHSLNMALI…IVMGLMLLIY (207 aa)). The helical transmembrane segment at 71–91 (MALIATLSCLVLGYPFAWFLA) threads the bilayer. Residues 92 to 99 (KLPEKIRP) lie on the Cytoplasmic side of the membrane. A helical transmembrane segment spans residues 100–120 (LLLFLLIVPFWTNSLIRIYGL). At 121–145 (KIFLSTKGYLNEFLLWLGVIDTPIR) the chain is on the periplasmic side. Residues 146–166 (IMFTPSAVIIGLVYILLPFMV) form a helical membrane-spanning segment. Residues 167-197 (MPLYSSIEKLDKPLLEAARDLGASKMQTFIR) lie on the Cytoplasmic side of the membrane. The chain crosses the membrane as a helical span at residues 198–218 (IIIPLTMPGIVAGCLLVMLPA). Residues 219-251 (MGLFYVSDLMGGAKNLLIGNVIKVQFLNIRDWP) are Periplasmic-facing. The helical transmembrane segment at 252–272 (FGAATSITLTIVMGLMLLIYW) threads the bilayer. The Cytoplasmic portion of the chain corresponds to 273 to 287 (RASRLLNKKVSDISD).

The protein belongs to the binding-protein-dependent transport system permease family. CysTW subfamily.

The protein localises to the cell inner membrane. Required for the activity of the bacterial periplasmic transport system of putrescine and spermidine. This is Spermidine/putrescine transport system permease protein PotB (potB) from Salmonella typhi.